The sequence spans 807 residues: Glycerol-3-phosphate acyltransferase (807 aa).

The short motif at cysteine 305–methionine 310 is the HXXXXD motif element.

The protein belongs to the GPAT/DAPAT family.

It localises to the cell inner membrane. The enzyme catalyses sn-glycerol 3-phosphate + an acyl-CoA = a 1-acyl-sn-glycero-3-phosphate + CoA. Its pathway is phospholipid metabolism; CDP-diacylglycerol biosynthesis; CDP-diacylglycerol from sn-glycerol 3-phosphate: step 1/3. This chain is Glycerol-3-phosphate acyltransferase, found in Aliivibrio salmonicida (strain LFI1238) (Vibrio salmonicida (strain LFI1238)).